We begin with the raw amino-acid sequence, 97 residues long: Co-chaperonin GroES (97 aa).

It belongs to the GroES chaperonin family. As to quaternary structure, heptamer of 7 subunits arranged in a ring. Interacts with the chaperonin GroEL.

Its subcellular location is the cytoplasm. In terms of biological role, together with the chaperonin GroEL, plays an essential role in assisting protein folding. The GroEL-GroES system forms a nano-cage that allows encapsulation of the non-native substrate proteins and provides a physical environment optimized to promote and accelerate protein folding. GroES binds to the apical surface of the GroEL ring, thereby capping the opening of the GroEL channel. This chain is Co-chaperonin GroES, found in Pseudomonas fluorescens (strain Pf0-1).